An 88-amino-acid polypeptide reads, in one-letter code: Translation initiation factor IF-1 2 (88 aa).

The S1-like domain maps to 1 to 72 (MAKEELIEMQ…TKGRITFRHL (72 aa)).

Belongs to the IF-1 family. Component of the 30S ribosomal translation pre-initiation complex which assembles on the 30S ribosome in the order IF-2 and IF-3, IF-1 and N-formylmethionyl-tRNA(fMet); mRNA recruitment can occur at any time during PIC assembly.

The protein resides in the cytoplasm. In terms of biological role, one of the essential components for the initiation of protein synthesis. Stabilizes the binding of IF-2 and IF-3 on the 30S subunit to which N-formylmethionyl-tRNA(fMet) subsequently binds. Helps modulate mRNA selection, yielding the 30S pre-initiation complex (PIC). Upon addition of the 50S ribosomal subunit IF-1, IF-2 and IF-3 are released leaving the mature 70S translation initiation complex. The polypeptide is Translation initiation factor IF-1 2 (Acidovorax sp. (strain JS42)).